Consider the following 618-residue polypeptide: Chaperone protein HscA homolog (618 aa).

It belongs to the heat shock protein 70 family.

Its function is as follows. Chaperone involved in the maturation of iron-sulfur cluster-containing proteins. Has a low intrinsic ATPase activity which is markedly stimulated by HscB. The chain is Chaperone protein HscA homolog from Methylibium petroleiphilum (strain ATCC BAA-1232 / LMG 22953 / PM1).